The following is a 114-amino-acid chain: Nucleoid-associated protein slr1847 (114 aa).

This sequence belongs to the YbaB/EbfC family. As to quaternary structure, homodimer.

The protein localises to the cytoplasm. It localises to the nucleoid. Its function is as follows. Binds to DNA and alters its conformation. May be involved in regulation of gene expression, nucleoid organization and DNA protection. In Synechocystis sp. (strain ATCC 27184 / PCC 6803 / Kazusa), this protein is Nucleoid-associated protein slr1847.